The primary structure comprises 487 residues: 7-deoxyloganetin glucosyltransferase (487 aa).

His25 (proton acceptor) is an active-site residue. Residue His25 coordinates an anthocyanidin. The active-site Charge relay is Asp129. UDP-alpha-D-glucose is bound by residues Thr151, Gln366, His381, Trp384, Asn385, Ser386, and Glu389. Ala404 serves as a coordination point for an anthocyanidin. Glu405 and Gln406 together coordinate UDP-alpha-D-glucose.

This sequence belongs to the UDP-glycosyltransferase family. As to expression, expressed in roots.

The catalysed reaction is 7-deoxyloganetin + UDP-alpha-D-glucose = 7-deoxyloganin + UDP + H(+). Functionally, iridoid glucosyltransferase acting exclusively on 7-deoxyloganetin. No activity with 7-deoxyloganetic acid. This Catharanthus roseus (Madagascar periwinkle) protein is 7-deoxyloganetin glucosyltransferase (UGT85A23).